Reading from the N-terminus, the 739-residue chain is Phosphoribosylformylglycinamidine synthase subunit PurL (739 aa).

Residue H52 is part of the active site. ATP-binding residues include Y55 and K94. E96 contacts Mg(2+). Residues 97–100 and R119 each bind substrate; that span reads SHNH. The Proton acceptor role is filled by H98. Residue D120 coordinates Mg(2+). Residue Q243 participates in substrate binding. Residue D273 participates in Mg(2+) binding. Residue 317-319 participates in substrate binding; that stretch reads ESQ. ATP-binding residues include D500 and G537. Residue N538 coordinates Mg(2+). S540 provides a ligand contact to substrate.

The protein belongs to the FGAMS family. Monomer. Part of the FGAM synthase complex composed of 1 PurL, 1 PurQ and 2 PurS subunits.

The protein localises to the cytoplasm. It carries out the reaction N(2)-formyl-N(1)-(5-phospho-beta-D-ribosyl)glycinamide + L-glutamine + ATP + H2O = 2-formamido-N(1)-(5-O-phospho-beta-D-ribosyl)acetamidine + L-glutamate + ADP + phosphate + H(+). The protein operates within purine metabolism; IMP biosynthesis via de novo pathway; 5-amino-1-(5-phospho-D-ribosyl)imidazole from N(2)-formyl-N(1)-(5-phospho-D-ribosyl)glycinamide: step 1/2. Part of the phosphoribosylformylglycinamidine synthase complex involved in the purines biosynthetic pathway. Catalyzes the ATP-dependent conversion of formylglycinamide ribonucleotide (FGAR) and glutamine to yield formylglycinamidine ribonucleotide (FGAM) and glutamate. The FGAM synthase complex is composed of three subunits. PurQ produces an ammonia molecule by converting glutamine to glutamate. PurL transfers the ammonia molecule to FGAR to form FGAM in an ATP-dependent manner. PurS interacts with PurQ and PurL and is thought to assist in the transfer of the ammonia molecule from PurQ to PurL. In Enterococcus faecalis (strain ATCC 700802 / V583), this protein is Phosphoribosylformylglycinamidine synthase subunit PurL.